Consider the following 586-residue polypeptide: Arginine--tRNA ligase (586 aa).

The short motif at 133 to 143 is the 'HIGH' region element; that stretch reads ANPTGPLNIVS.

Belongs to the class-I aminoacyl-tRNA synthetase family. As to quaternary structure, monomer.

It localises to the cytoplasm. The catalysed reaction is tRNA(Arg) + L-arginine + ATP = L-arginyl-tRNA(Arg) + AMP + diphosphate. The protein is Arginine--tRNA ligase of Leptospira interrogans serogroup Icterohaemorrhagiae serovar Lai (strain 56601).